The chain runs to 373 residues: Cobalt-precorrin-5B C(1)-methyltransferase (373 aa).

This sequence belongs to the CbiD family.

It carries out the reaction Co-precorrin-5B + S-adenosyl-L-methionine = Co-precorrin-6A + S-adenosyl-L-homocysteine. It participates in cofactor biosynthesis; adenosylcobalamin biosynthesis; cob(II)yrinate a,c-diamide from sirohydrochlorin (anaerobic route): step 6/10. Catalyzes the methylation of C-1 in cobalt-precorrin-5B to form cobalt-precorrin-6A. The protein is Cobalt-precorrin-5B C(1)-methyltransferase of Listeria monocytogenes serovar 1/2a (strain ATCC BAA-679 / EGD-e).